The chain runs to 389 residues: Maintenance of mitochondrial morphology protein 1-1 (389 aa).

The Lumenal segment spans residues 1 to 22; that stretch reads MSQFVLPAVASEGIINWPFLTG. The chain crosses the membrane as a helical span at residues 23–43; sequence FMLGQFSVGLVLLIFVRFFIF. Topologically, residues 44 to 389 are cytoplasmic; sequence SDQTEPDINT…YRSLQTSPRR (346 aa). An SMP-LTD domain is found at 83 to 278; it reads QPESLDWFSV…YPEYQQFELP (196 aa). Disordered stretches follow at residues 283–345 and 360–389; these read KTSA…PKFI and FYEM…SPRR. Residues 330–341 are compositionally biased toward polar residues; it reads MSMSSQRPNINN.

Belongs to the MMM1 family. In terms of assembly, homodimer. Component of the ER-mitochondria encounter structure (ERMES) or MDM complex, composed of MMM1, MDM10, MDM12 and MDM34. An MMM1 homodimer associates with one molecule of MDM12 on each side in a pairwise head-to-tail manner, and the SMP-LTD domains of MMM1 and MDM12 generate a continuous hydrophobic tunnel for phospholipid trafficking.

Its subcellular location is the endoplasmic reticulum membrane. Component of the ERMES/MDM complex, which serves as a molecular tether to connect the endoplasmic reticulum (ER) and mitochondria. Components of this complex are involved in the control of mitochondrial shape and protein biogenesis, and function in nonvesicular lipid trafficking between the ER and mitochondria. The MDM12-MMM11 subcomplex functions in the major beta-barrel assembly pathway that is responsible for biogenesis of all outer membrane beta-barrel proteins, and acts in a late step after the SAM complex. The MDM10-MDM12-MMM1 subcomplex further acts in the TOM40-specific pathway after the action of the MDM12-MMM1 complex. Essential for establishing and maintaining the structure of mitochondria and maintenance of mtDNA nucleoids. This is Maintenance of mitochondrial morphology protein 1-1 from Yarrowia lipolytica (strain CLIB 122 / E 150) (Yeast).